The sequence spans 94 residues: Co-chaperonin GroES (94 aa).

Belongs to the GroES chaperonin family. Heptamer of 7 subunits arranged in a ring. Interacts with the chaperonin GroEL.

The protein resides in the cytoplasm. Together with the chaperonin GroEL, plays an essential role in assisting protein folding. The GroEL-GroES system forms a nano-cage that allows encapsulation of the non-native substrate proteins and provides a physical environment optimized to promote and accelerate protein folding. GroES binds to the apical surface of the GroEL ring, thereby capping the opening of the GroEL channel. This Listeria innocua serovar 6a (strain ATCC BAA-680 / CLIP 11262) protein is Co-chaperonin GroES.